The chain runs to 263 residues: Protein YpjB (263 aa).

Acidic residues predominate over residues 233-244 (DFDDSSSEDDPV). A disordered region spans residues 233–263 (DFDDSSSEDDPVENSPVVTSPVVSSSKSSFQ). A compositionally biased stretch (low complexity) spans 245–263 (ENSPVVTSPVVSSSKSSFQ).

The protein is Protein YpjB (ypjB) of Escherichia coli (strain K12).